A 252-amino-acid chain; its full sequence is 2-succinyl-6-hydroxy-2,4-cyclohexadiene-1-carboxylate synthase (252 aa).

This sequence belongs to the AB hydrolase superfamily. MenH family. In terms of assembly, monomer.

The enzyme catalyses 5-enolpyruvoyl-6-hydroxy-2-succinyl-cyclohex-3-ene-1-carboxylate = (1R,6R)-6-hydroxy-2-succinyl-cyclohexa-2,4-diene-1-carboxylate + pyruvate. It functions in the pathway quinol/quinone metabolism; 1,4-dihydroxy-2-naphthoate biosynthesis; 1,4-dihydroxy-2-naphthoate from chorismate: step 3/7. It participates in quinol/quinone metabolism; menaquinone biosynthesis. In terms of biological role, catalyzes a proton abstraction reaction that results in 2,5-elimination of pyruvate from 2-succinyl-5-enolpyruvyl-6-hydroxy-3-cyclohexene-1-carboxylate (SEPHCHC) and the formation of 2-succinyl-6-hydroxy-2,4-cyclohexadiene-1-carboxylate (SHCHC). The sequence is that of 2-succinyl-6-hydroxy-2,4-cyclohexadiene-1-carboxylate synthase from Escherichia coli O81 (strain ED1a).